Consider the following 1066-residue polypeptide: Pumilio homolog 2 (1066 aa).

The interaction with SNAPIN stretch occupies residues 1 to 260 (MNHDFQALAL…ATVGLFDYNS (260 aa)). 3 positions are modified to phosphoserine: Ser67, Ser82, and Ser102. The tract at residues 106–204 (KLDSRFRKGN…NPSEGLGPLP (99 aa)) is disordered. Basic and acidic residues predominate over residues 119–133 (RDAETDGPEKGDQKG). 3 positions are modified to phosphoserine: Ser136, Ser178, and Ser182. Phosphothreonine is present on residues Thr184 and Thr396. A disordered region spans residues 494-553 (STNGLFRPIGTQPPQQQQQQPSTNLQSNSFYGSSSLTNSSQSSSLFSHGPGQPGSTSLGF). The segment covering 505 to 514 (QPPQQQQQQP) has biased composition (low complexity). A compositionally biased stretch (polar residues) spans 515–525 (STNLQSNSFYG). A compositionally biased stretch (low complexity) spans 526-540 (SSSLTNSSQSSSLFS). Phosphoserine is present on residues Ser587 and Ser592. The interval 620 to 650 (SPIGMPLPSQTPGHSLTPPPSLSSHGSSSSL) is disordered. Over residues 630-650 (TPGHSLTPPPSLSSHGSSSSL) the composition is skewed to low complexity. Arg674 is modified (omega-N-methylarginine). Ser684 and Ser700 each carry phosphoserine. The region spanning 706-1048 (GRSRLLEDFR…HILAKLEKYY (343 aa)) is the PUM-HD domain. Pumilio repeat units follow at residues 726-761 (DLIG…MVFN), 762-797 (EILQ…ALAT), 798-835 (RIRG…EMVK), 836-871 (ELDG…FIID), 872-907 (AFKG…PILE), 908-943 (ELHQ…KIVS), 944-979 (EIRG…LLID), and 983-1022 (CQND…IIMH). Residues 741 to 745 (SRFIQ) are adenine-nucleotide binding in RNA target. The segment at 777 to 781 (NYVIQ) is uracil-nucleotide binding in RNA target. The interval 813 to 817 (CRVIQ) is adenine-nucleotide binding in RNA target. The non-specific-nucleotide binding in RNA target stretch occupies residues 851–855 (NHVVQ). Residues 887-891 (CRVIQ) are adenine-nucleotide binding in RNA target. Residues 923 to 927 (NYVIQ) are uracil-nucleotide binding in RNA target. A guanine-nucleotide binding in RNA target region spans residues 959 to 963 (SNVVE). Positions 1002–1006 (NYVVQ) are uracil-nucleotide binding in RNA target.

Homodimer; homodimerizes in vitro. Interacts with DAZ1, DAZL and NANOS1 via its pumilio repeats. Interacts with NANOS3. Interacts with SNAPIN. Recruits the CCR4-POP2-NOT deadenylase leading to translational inhibition and mRNA degradation. Interacts with DDX20. In case of viral infection, interacts with DHX58. Interacts with TRIM71 (via NHL repeats) in an RNA-dependent manner. In terms of tissue distribution, expressed in male germ cells of adult testis (at protein level). Highly expressed in testis and ovary. Predominantly expressed in stem cells and germ cells. Expressed at lower level in brain, heart, kidney, liver, muscle, placenta, intestine and stomach Expressed in cerebellum, corpus callosum, caudate nucleus, hippocampus, medulla oblongata and putamen. Expressed in all fetal tissues tested.

It localises to the cytoplasm. The protein localises to the cytoplasmic granule. It is found in the perinuclear region. Functionally, sequence-specific RNA-binding protein that acts as a post-transcriptional repressor by binding the 3'-UTR of mRNA targets. Binds to an RNA consensus sequence, the Pumilio Response Element (PRE), 5'-UGUANAUA-3', that is related to the Nanos Response Element (NRE) (, PubMed:21397187). Mediates post-transcriptional repression of transcripts via different mechanisms: acts via direct recruitment of the CCR4-POP2-NOT deadenylase leading to translational inhibition and mRNA degradation. Also mediates deadenylation-independent repression by promoting accessibility of miRNAs. Acts as a post-transcriptional repressor of E2F3 mRNAs by binding to its 3'-UTR and facilitating miRNA regulation. Plays a role in cytoplasmic sensing of viral infection. Represses a program of genes necessary to maintain genomic stability such as key mitotic, DNA repair and DNA replication factors. Its ability to repress those target mRNAs is regulated by the lncRNA NORAD (non-coding RNA activated by DNA damage) which, due to its high abundance and multitude of PUMILIO binding sites, is able to sequester a significant fraction of PUM1 and PUM2 in the cytoplasm. May regulate DCUN1D3 mRNA levels. May support proliferation and self-renewal of stem cells. Binds specifically to miRNA MIR199A precursor, with PUM1, regulates miRNA MIR199A expression at a postranscriptional level. The chain is Pumilio homolog 2 (PUM2) from Homo sapiens (Human).